A 379-amino-acid chain; its full sequence is Cobalt-precorrin-5B C(1)-methyltransferase (379 aa).

This sequence belongs to the CbiD family.

It carries out the reaction Co-precorrin-5B + S-adenosyl-L-methionine = Co-precorrin-6A + S-adenosyl-L-homocysteine. It participates in cofactor biosynthesis; adenosylcobalamin biosynthesis; cob(II)yrinate a,c-diamide from sirohydrochlorin (anaerobic route): step 6/10. Catalyzes the methylation of C-1 in cobalt-precorrin-5B to form cobalt-precorrin-6A. This Salmonella paratyphi B (strain ATCC BAA-1250 / SPB7) protein is Cobalt-precorrin-5B C(1)-methyltransferase.